Here is a 61-residue protein sequence, read N- to C-terminus: Translational regulator CsrA (61 aa).

Belongs to the CsrA/RsmA family. Homodimer; the beta-strands of each monomer intercalate to form a hydrophobic core, while the alpha-helices form wings that extend away from the core.

It localises to the cytoplasm. A key translational regulator that binds mRNA to regulate translation initiation and/or mRNA stability. Mediates global changes in gene expression, shifting from rapid growth to stress survival by linking envelope stress, the stringent response and the catabolite repression systems. Usually binds in the 5'-UTR; binding at or near the Shine-Dalgarno sequence prevents ribosome-binding, repressing translation, binding elsewhere in the 5'-UTR can activate translation and/or stabilize the mRNA. Its function is antagonized by small RNA(s). This is Translational regulator CsrA from Actinobacillus succinogenes (strain ATCC 55618 / DSM 22257 / CCUG 43843 / 130Z).